The chain runs to 201 residues: Membrane protein UL120 (201 aa).

The signal sequence occupies residues 1–25 (MYRAGVTLLVVAVVSFGRWDSVTVA). Residues 26 to 170 (TTIRVGWWYE…AYFRRSDHRA (145 aa)) lie on the Extracellular side of the membrane. 8 N-linked (GlcNAc...) asparagine; by host glycosylation sites follow: Asn47, Asn50, Asn56, Asn85, Asn96, Asn114, Asn123, and Asn138. Residues 171–191 (FMIVILTQVVFVVFIINASFI) form a helical membrane-spanning segment. Topologically, residues 192 to 201 (WSWTFRRHKR) are cytoplasmic.

The protein belongs to the HHV-5 UL120 protein family.

It localises to the host membrane. The sequence is that of Membrane protein UL120 (UL120) from Human cytomegalovirus (strain Merlin) (HHV-5).